A 362-amino-acid chain; its full sequence is Glutamate 5-kinase (362 aa).

Residue Lys3 participates in ATP binding. Positions 43, 128, and 140 each coordinate substrate. Residues 160–161 and 202–208 contribute to the ATP site; these read TD and TGGMRTK. The 82-residue stretch at 267–348 folds into the PUA domain; the sequence is PGTILIDAGA…REIEPILGYS (82 aa).

Belongs to the glutamate 5-kinase family.

It localises to the cytoplasm. The enzyme catalyses L-glutamate + ATP = L-glutamyl 5-phosphate + ADP. It functions in the pathway amino-acid biosynthesis; L-proline biosynthesis; L-glutamate 5-semialdehyde from L-glutamate: step 1/2. In terms of biological role, catalyzes the transfer of a phosphate group to glutamate to form L-glutamate 5-phosphate. The protein is Glutamate 5-kinase of Xanthomonas campestris pv. campestris (strain 8004).